The chain runs to 314 residues: BTB/POZ domain-containing adapter for CUL3-mediated RhoA degradation protein 2 (314 aa).

The BTB domain occupies 32–100; sequence KYVRLNVGGS…LRDDTIALPK (69 aa).

It belongs to the BACURD family. In terms of assembly, component of the BCR(TNFAIP1) E3 ubiquitin ligase complex, at least composed of CUL3, TNFAIP1/BACURD2 and RBX1.

It localises to the cytoplasm. The protein localises to the nucleus. It is found in the endosome. The protein operates within protein modification; protein ubiquitination. Substrate-specific adapter of a BCR (BTB-CUL3-RBX1) E3 ubiquitin-protein ligase complex involved in regulation of cytoskeleton structure. The BCR(TNFAIP1) E3 ubiquitin ligase complex mediates the ubiquitination of target proteins, leading to their degradation by the proteasome. The chain is BTB/POZ domain-containing adapter for CUL3-mediated RhoA degradation protein 2 (TNFAIP1) from Gallus gallus (Chicken).